The primary structure comprises 356 residues: MHKVLAIETSCDETSVSIVSNIGDTFRIHSNIIASQIEDHSKWGGVVPELAARKHLELLPFVLEKALEQAKIKIEEVDYIASTVAPGLVGCLRVGSITARSLCMLHSKPFLGIHHLEGHLSSILFSENYPKKSFLTLLVSGGHTELIKVDDNRGMQRLGKSFDDAAGEAFDKVGRLLGLGYPGGPAIEKIAKNGDPMKFNLPKCRISDKKGGFLKYDFSFSGLKTAVLRLVERINLAGKTVPIPDIAASFERVVAEVLVERTIKCAEDHRLDNVVVVGGVAANNTLRKMMISEASKKSIKVHLAPLDLCTDNAAMIGAAALFRIKFKDHLSNLKLGVAGRLSIEQANTLYEENPPF.

Fe cation contacts are provided by His115 and His119. Residues 138–142 (LVSGG), Asp171, Gly184, and Asn283 contribute to the substrate site. Asp311 contributes to the Fe cation binding site.

The protein belongs to the KAE1 / TsaD family. The cofactor is Fe(2+).

It is found in the cytoplasm. It catalyses the reaction L-threonylcarbamoyladenylate + adenosine(37) in tRNA = N(6)-L-threonylcarbamoyladenosine(37) in tRNA + AMP + H(+). Its function is as follows. Required for the formation of a threonylcarbamoyl group on adenosine at position 37 (t(6)A37) in tRNAs that read codons beginning with adenine. Is involved in the transfer of the threonylcarbamoyl moiety of threonylcarbamoyl-AMP (TC-AMP) to the N6 group of A37, together with TsaE and TsaB. TsaD likely plays a direct catalytic role in this reaction. In Prochlorococcus marinus (strain MIT 9301), this protein is tRNA N6-adenosine threonylcarbamoyltransferase.